The following is a 267-amino-acid chain: Large ribosomal subunit protein uL4 (267 aa).

Belongs to the universal ribosomal protein uL4 family. Part of the 50S ribosomal subunit.

In terms of biological role, one of the primary rRNA binding proteins, this protein initially binds near the 5'-end of the 23S rRNA. It is important during the early stages of 50S assembly. It makes multiple contacts with different domains of the 23S rRNA in the assembled 50S subunit and ribosome. Its function is as follows. Forms part of the polypeptide exit tunnel. This Saccharolobus solfataricus (strain ATCC 35092 / DSM 1617 / JCM 11322 / P2) (Sulfolobus solfataricus) protein is Large ribosomal subunit protein uL4.